Consider the following 189-residue polypeptide: Probable thymidylate kinase 1 (189 aa).

9–16 (GIDGSGKT) serves as a coordination point for ATP.

It belongs to the thymidylate kinase family.

It catalyses the reaction dTMP + ATP = dTDP + ADP. The polypeptide is Probable thymidylate kinase 1 (tmk1) (Saccharolobus solfataricus (strain ATCC 35092 / DSM 1617 / JCM 11322 / P2) (Sulfolobus solfataricus)).